The primary structure comprises 183 residues: Proton-transporting V-type ATPase complex assembly regulator TMEM9 (183 aa).

The signal sequence occupies residues Met1–Ala20. 3 N-linked (GlcNAc...) asparagine glycosylation sites follow: Asn21, Asn38, and Asn47. Residues Asn21–Lys89 lie on the Extracellular side of the membrane. A helical transmembrane segment spans residues Val90–Met110. At Leu111–Ser183 the chain is on the cytoplasmic side. Phosphoserine is present on residues Ser137 and Ser144.

It belongs to the TMEM9 family. In terms of assembly, interacts with the v-ATPase accessory protein ATP6AP2 and with the v-ATPase complex subunit ATP6V0D1; these interactions lead to the assembly of the v-ATPase complex. N-glycosylated. Highly expressed in adrenal gland, thyroid gland, testis, ovary and prostate. Moderate expression in trachea, spinal cord, stomach, colon, small intestine and spleen. Low expression in bone marrow, lymph node, thymus and peripheral blood lymphocytes. Expression is detected in hematopoietic cell lines including those of myeloid, erythroid, B- and T-cell origin.

The protein resides in the lysosome membrane. The protein localises to the late endosome membrane. It is found in the endosome. It localises to the multivesicular body membrane. Transmembrane protein that binds to and facilitates the assembly of lysosomal proton-transporting V-type ATPase (v-ATPase), resulting in enhanced lysosomal acidification and trafficking. By bringing the v-ATPase accessory protein ATP6AP2 and the v-ATPase subunit ATP6V0D1 together, allows v-ATPase complex formation and activation. TMEM9-controlled vesicular acidification induces hyperactivation of Wnt/beta-catenin signaling, involved in development, tissue homeostasis and tissue regeneration, through lysosomal degradation of adenomatous polyposis coli/APC. In the liver, involved in hepatic regeneration. The polypeptide is Proton-transporting V-type ATPase complex assembly regulator TMEM9 (Homo sapiens (Human)).